The chain runs to 492 residues: MDQPSNGFAAGGLFLRHIDGQNASPPSVIVIGGGISGIAAARALSNASFKVTLLESRDRLGGRVHTDYSFGCPIDMGASWLHGVCNENSLAPLIRLLGLRLYRTSGDNSVLYDHDLESYALFDKDGRQVPQEIVTKVGETFEKILKETVKVRAEHEDDMPLIQAISIVLDRNPHLKLDGLQYEVLQWCICRLEAWFATDVDNISLKNWDQEHVLTGGHGLMVHGYDPVIKALAQDLDIHLNHRVTKIIQRYNKTIVCVEDGTSFVADAAIITVPLGVLKANIIKFEPELPDWKLSSISDLGIGIENKIALRFNSVFWPNVEVLGRVAPTSNACGYFLNLHKATGHPVLVCMVAGRFAYEFEKLSDEESVNFVMSQLKKMLPGATEPVQYLVSRWGTDPNSLGSYSCDLVGKPADLYERFCAPVGNLFFAGEAACIDHSGSVHGAYSSGIVAAEDCRRHLSTQLGISDLFQVGKIIMREEMTEVMVPFQISRL.

The FAD site is built by E55, R63, V244, and E431. The Microbody targeting signal signature appears at 490–492 (SRL).

It belongs to the flavin monoamine oxidase family. FAD serves as cofactor. In terms of tissue distribution, widely expressed.

It localises to the peroxisome. It carries out the reaction spermine + O2 + H2O = 3-aminopropanal + spermidine + H2O2. The enzyme catalyses norspermine + O2 + H2O = norspermidine + 3-aminopropanal + H2O2. The catalysed reaction is thermospermine + O2 + H2O = 3-aminopropanal + spermidine + H2O2. Its pathway is amine and polyamine degradation; spermine degradation. Functionally, flavoenzyme involved in polyamine back-conversion. Catalyzes the oxidation of the secondary amino group of polyamines, such as spermine. Substrate preference is spermine &gt; thermospermine &gt; norspermine. No activity detected when putrescine, spermidine or N(1)-acetylspermidine are used as substrates. Plays an important role in the regulation of polyamine intracellular concentration. May play a role in producing hydrogen peroxide during seed germination. This Oryza sativa subsp. japonica (Rice) protein is Polyamine oxidase 5.